The primary structure comprises 332 residues: Phenylalanine--tRNA ligase alpha subunit (332 aa).

E254 provides a ligand contact to Mg(2+).

It belongs to the class-II aminoacyl-tRNA synthetase family. Phe-tRNA synthetase alpha subunit type 1 subfamily. Tetramer of two alpha and two beta subunits. It depends on Mg(2+) as a cofactor.

It localises to the cytoplasm. It carries out the reaction tRNA(Phe) + L-phenylalanine + ATP = L-phenylalanyl-tRNA(Phe) + AMP + diphosphate + H(+). This chain is Phenylalanine--tRNA ligase alpha subunit, found in Hydrogenovibrio crunogenus (strain DSM 25203 / XCL-2) (Thiomicrospira crunogena).